Here is a 172-residue protein sequence, read N- to C-terminus: Large ribosomal subunit protein uL10 (172 aa).

It belongs to the universal ribosomal protein uL10 family. As to quaternary structure, part of the ribosomal stalk of the 50S ribosomal subunit. The N-terminus interacts with L11 and the large rRNA to form the base of the stalk. The C-terminus forms an elongated spine to which L12 dimers bind in a sequential fashion forming a multimeric L10(L12)X complex.

Forms part of the ribosomal stalk, playing a central role in the interaction of the ribosome with GTP-bound translation factors. This chain is Large ribosomal subunit protein uL10, found in Caulobacter sp. (strain K31).